A 747-amino-acid polypeptide reads, in one-letter code: Cysteine--tRNA ligase, cytoplasmic (747 aa).

Positions 1–26 (MTESWEQGKGRRTQPPWSAPNTNEQP) are disordered. Residues 15 to 25 (PPWSAPNTNEQ) are compositionally biased toward polar residues. Cysteine 54 contacts Zn(2+). An L-cysteine-binding site is contributed by glycine 55. The short motif at 56-66 (PTVYDASHMGH) is the 'HIGH' region element. Residue threonine 95 coordinates L-cysteine. Residues 100–103 (KIIK) carry the 'KIIK' region motif. 3 residues coordinate Zn(2+): cysteine 347, histidine 372, and glutamate 376. Residue histidine 372 coordinates L-cysteine. The short motif at 405-409 (KMSKS) is the 'KMSKS' region element. Lysine 408 lines the ATP pocket. Positions 651-683 (EEKRKAEEEKQRKKEEAARKKQQQEAAKLEKMK) are enriched in basic and acidic residues. Disordered regions lie at residues 651 to 685 (EEKRKAEEEKQRKKEEAARKKQQQEAAKLEKMKIS) and 700 to 721 (FDESGFPTHDTEGKELSKGQTK).

This sequence belongs to the class-I aminoacyl-tRNA synthetase family. In terms of assembly, homodimer. It depends on Zn(2+) as a cofactor.

The protein resides in the cytoplasm. It catalyses the reaction tRNA(Cys) + L-cysteine + ATP = L-cysteinyl-tRNA(Cys) + AMP + diphosphate. Functionally, catalyzes the ATP-dependent ligation of cysteine to tRNA(Cys). This is Cysteine--tRNA ligase, cytoplasmic (cars1) from Xenopus laevis (African clawed frog).